Consider the following 741-residue polypeptide: MATKFPKFSQDLAQDPTTRRIWYAMAMGNDFESHDGMTEENLYQKIFATHFGHLAIIFLWASSLLFHVAWQGNFEQWIKDPLHVRPIAHAIWDPHFGKPAIEAFTQAGANGPVNIAYSGVYHWWYTIGMRTNTELYTGSVFLLLFASLFLFAGWLHLQPKFRPSLAWFKSAESRLNHHLAGLFGVSSLAWAGHLIHVAIPESRGQHVGWDNFLTTAPHPAGLQPFFTGNWGVYAQNPDTAGHIFSTSQGSGTAILTFLGGFHPQTESLWLTDIAHHHLAIAVLFIVAGHMYRTNFGIGHSIKEMMNAKTFFGKPVEGPFNMPHQGIYDTYNNSLHFQLGWHLACLGVVTSWVAQHMYSLPSYAFIAKDYTTQAALYTHHQYIAIFLMVGAFAHGAIFLVRDYDPEQNKGNVLERVLQHKEAIISHLSWVSLFLGFHTLGLYVHNDVVVAFGTPEKQILIEPVFAQFIQAAHGKVLYGLDTLLSNPDSVAYTAYPNYANVWLPGWLDAINSGTNSLFLTIGPGDFLVHHAIALGLHTTTLILVKGALDARGSKLMPDKKDFGYAFPCDGPGRGGTCDISAWDSFYLSLFWALNTVGWVTFYWHWKHLGIWQGNVAQFNENSTYLMGWFRDYLWANSAQLINGYNPYGVNNLSVWAWMFLFGHLVWATGFMFLISWRGYWQELIETLVWAHERTPIANLIRWKDKPVALSIVQARVVGLAHFTVGYVLTYAAFLIASTAGKFG.

A run of 8 helical transmembrane segments spans residues 46–69 (IFATHFGHLAIIFLWASSLLFHVA), 135–158 (LYTGSVFLLLFASLFLFAGWLHLQ), 175–199 (LNHHLAGLFGVSSLAWAGHLIHVAI), 273–291 (IAHHHLAIAVLFIVAGHMY), 334–357 (LHFQLGWHLACLGVVTSWVAQHMY), 373–399 (AALYTHHQYIAIFLMVGAFAHGAIFLV), 421–443 (AIISHLSWVSLFLGFHTLGLYVH), and 524–542 (FLVHHAIALGLHTTTLILV). 2 residues coordinate [4Fe-4S] cluster: C566 and C575. 2 helical membrane passes run 582 to 603 (SFYLSLFWALNTVGWVTFYWHW) and 650 to 672 (LSVWAWMFLFGHLVWATGFMFLI). Residues H661, M669, and Y677 each coordinate chlorophyll a. Phylloquinone is bound at residue W678. Residues 714 to 734 (VVGLAHFTVGYVLTYAAFLIA) traverse the membrane as a helical segment.

It belongs to the PsaA/PsaB family. As to quaternary structure, the PsaA/B heterodimer binds the P700 chlorophyll special pair and subsequent electron acceptors. PSI consists of a core antenna complex that captures photons, and an electron transfer chain that converts photonic excitation into a charge separation. The cyanobacterial PSI reaction center is composed of one copy each of PsaA,B,C,D,E,F,I,J,K,L,M and X, and forms trimeric complexes. The cofactor is PSI electron transfer chain: 5 chlorophyll a, 1 chlorophyll a', 2 phylloquinones and 3 4Fe-4S clusters. PSI core antenna: 90 chlorophyll a, 22 carotenoids, 3 phospholipids and 1 galactolipid. P700 is a chlorophyll a/chlorophyll a' dimer, A0 is one or more chlorophyll a, A1 is one or both phylloquinones and FX is a shared 4Fe-4S iron-sulfur center..

Its subcellular location is the cellular thylakoid membrane. The catalysed reaction is reduced [plastocyanin] + hnu + oxidized [2Fe-2S]-[ferredoxin] = oxidized [plastocyanin] + reduced [2Fe-2S]-[ferredoxin]. PsaA and PsaB bind P700, the primary electron donor of photosystem I (PSI), as well as the electron acceptors A0, A1 and FX. PSI is a plastocyanin/cytochrome c6-ferredoxin oxidoreductase, converting photonic excitation into a charge separation, which transfers an electron from the donor P700 chlorophyll pair to the spectroscopically characterized acceptors A0, A1, FX, FA and FB in turn. Oxidized P700 is reduced on the lumenal side of the thylakoid membrane by plastocyanin or cytochrome c6. The protein is Photosystem I P700 chlorophyll a apoprotein A2 1 of Trichormus variabilis (strain ATCC 29413 / PCC 7937) (Anabaena variabilis).